Here is an 87-residue protein sequence, read N- to C-terminus: Small ribosomal subunit protein bS18 (87 aa).

The interval 1 to 21 (MRHKPTPPKGNKSLGNALASK) is disordered.

Belongs to the bacterial ribosomal protein bS18 family. As to quaternary structure, part of the 30S ribosomal subunit. Forms a tight heterodimer with protein bS6.

Its function is as follows. Binds as a heterodimer with protein bS6 to the central domain of the 16S rRNA, where it helps stabilize the platform of the 30S subunit. The polypeptide is Small ribosomal subunit protein bS18 (Chlorobium phaeobacteroides (strain DSM 266 / SMG 266 / 2430)).